We begin with the raw amino-acid sequence, 351 residues long: Dihydroorotate dehydrogenase (quinone) (351 aa).

FMN is bound by residues 65-69 (AGLDK) and threonine 89. Residue lysine 69 participates in substrate binding. 114 to 118 (NRLGF) lines the substrate pocket. The FMN site is built by asparagine 150 and asparagine 183. Asparagine 183 is a binding site for substrate. The active-site Nucleophile is the serine 186. Asparagine 188 provides a ligand contact to substrate. FMN contacts are provided by lysine 228 and threonine 256. 257-258 (NT) contacts substrate. Residues glycine 279, glycine 308, and 329-330 (YT) each bind FMN.

The protein belongs to the dihydroorotate dehydrogenase family. Type 2 subfamily. As to quaternary structure, monomer. FMN serves as cofactor.

The protein localises to the cell membrane. The catalysed reaction is (S)-dihydroorotate + a quinone = orotate + a quinol. It functions in the pathway pyrimidine metabolism; UMP biosynthesis via de novo pathway; orotate from (S)-dihydroorotate (quinone route): step 1/1. Its function is as follows. Catalyzes the conversion of dihydroorotate to orotate with quinone as electron acceptor. This Acidovorax ebreus (strain TPSY) (Diaphorobacter sp. (strain TPSY)) protein is Dihydroorotate dehydrogenase (quinone).